The following is a 197-amino-acid chain: Probable GTP-binding protein EngB (197 aa).

Positions 25-197 (SAPEIAFAGR…VRDEFFKFTR (173 aa)) constitute an EngB-type G domain. Residues 33–40 (GRSNVGKS), 60–64 (GCTRQ), 79–82 (DLPG), 146–149 (TKID), and 177–179 (MSI) each bind GTP. Residues Ser40 and Thr62 each coordinate Mg(2+).

Belongs to the TRAFAC class TrmE-Era-EngA-EngB-Septin-like GTPase superfamily. EngB GTPase family. It depends on Mg(2+) as a cofactor.

Functionally, necessary for normal cell division and for the maintenance of normal septation. In Wolbachia sp. subsp. Drosophila simulans (strain wRi), this protein is Probable GTP-binding protein EngB.